A 210-amino-acid polypeptide reads, in one-letter code: FMN-dependent NADH:quinone oxidoreductase (210 aa).

FMN contacts are provided by residues 17 to 19, 102 to 105, and 148 to 151; these read SRS, MWNL, and SCGG.

Belongs to the azoreductase type 1 family. In terms of assembly, homodimer. It depends on FMN as a cofactor.

The enzyme catalyses 2 a quinone + NADH + H(+) = 2 a 1,4-benzosemiquinone + NAD(+). The catalysed reaction is N,N-dimethyl-1,4-phenylenediamine + anthranilate + 2 NAD(+) = 2-(4-dimethylaminophenyl)diazenylbenzoate + 2 NADH + 2 H(+). Quinone reductase that provides resistance to thiol-specific stress caused by electrophilic quinones. Its function is as follows. Also exhibits azoreductase activity. Catalyzes the reductive cleavage of the azo bond in aromatic azo compounds to the corresponding amines. The sequence is that of FMN-dependent NADH:quinone oxidoreductase from Trichlorobacter lovleyi (strain ATCC BAA-1151 / DSM 17278 / SZ) (Geobacter lovleyi).